The primary structure comprises 389 residues: Pyruvate synthase subunit PorA (389 aa).

Heterotetramer of one alpha, one beta, one delta and one gamma chain.

The catalysed reaction is 2 oxidized [2Fe-2S]-[ferredoxin] + pyruvate + CoA = 2 reduced [2Fe-2S]-[ferredoxin] + acetyl-CoA + CO2 + H(+). The sequence is that of Pyruvate synthase subunit PorA (porA) from Methanocaldococcus jannaschii (strain ATCC 43067 / DSM 2661 / JAL-1 / JCM 10045 / NBRC 100440) (Methanococcus jannaschii).